The primary structure comprises 199 residues: Nicotinamide riboside kinase 1 (199 aa).

10 to 18 provides a ligand contact to ATP; it reads GVTNSGKTT. Positions 17 and 36 each coordinate Mg(2+). The active-site Proton acceptor is D36. Substrate contacts are provided by residues 36–39 and 55–56; these read DDFF and YD. Residue R128 participates in ATP binding. Residues R129 and 134–135 contribute to the substrate site; that span reads YQ. Residues 132-134 and 172-174 each bind ATP; these read RVY and KSE.

It belongs to the uridine kinase family. NRK subfamily. As to quaternary structure, monomer.

The catalysed reaction is beta-nicotinamide D-riboside + ATP = beta-nicotinamide D-ribonucleotide + ADP + H(+). It carries out the reaction beta-D-ribosylnicotinate + ATP = nicotinate beta-D-ribonucleotide + ADP + H(+). It participates in cofactor biosynthesis; NAD(+) biosynthesis. Catalyzes the phosphorylation of nicotinamide riboside (NR) and nicotinic acid riboside (NaR) to form nicotinamide mononucleotide (NMN) and nicotinic acid mononucleotide (NaMN). The enzyme also phosphorylates the antitumor drugs tiazofurin and 3-deazaguanosine. In Homo sapiens (Human), this protein is Nicotinamide riboside kinase 1 (NMRK1).